The primary structure comprises 555 residues: Carboxysome assembly protein CcmM (555 aa).

The tract at residues 1–209 (MAVRSTAAPP…CIAPLRNDQV (209 aa)) is has carbonic anhydrase (CA) activity. Catalysis depends on Glu56, which acts as the Proton donor/acceptor. His75, His102, and His107 together coordinate Zn(2+). A disulfide bridge connects residues Cys194 and Cys200. Positions 223-315 (SSEVASNSLG…RVLETIIQRP (93 aa)) are rbcS-like repeat 1, SSUL1. Disordered regions lie at residues 323 to 351 (TSFK…SNGA) and 441 to 464 (NGQV…SGTA). 2 stretches are compositionally biased toward low complexity: residues 330–351 (SNTN…SNGA) and 445–464 (APSS…SGTA). Residues 347–440 (YSNGATSGKV…RVLESIIQRP (94 aa)) are rbcS-like repeat 2, SSUL2. Positions 460–555 (SSGTATATAT…RVLETIIQRP (96 aa)) are rbcS-like repeat 3, SSUL3.

Belongs to the gamma-class carbonic anhydrase family. In terms of assembly, probable homotrimer; zinc is bound between adjacent monomers. Full length protein (M58) interacts with CcmN. The C-terminal RbcS-like domains (SSUL) bind to holo-RuBisCO, as does the M35 short form. Zn(2+) serves as cofactor. The first amino acid of the short form (equivalent to Val-226) is not seen in Edman degradation, while Ser-230 may be post-translationally modified. Migrates in gels as 2 about equal forms of about 60 and 35 kDa (called M58 and M35). They are probably the result of alternative translation initiation.

The protein resides in the carboxysome. Its subcellular location is the cytoplasm. The enzyme catalyses hydrogencarbonate + H(+) = CO2 + H2O. Its activity is regulated as follows. Carbonic anhydrase (CA) activity is probably under redox control to remain inactive in the cytoplasm. Carbonic anhydrase (CA) activity of full-length protein and N-terminal fragment is inhibited by ethoxyzolamide. N-terminal fragment CA activity is activated under oxidizing conditions and inhibited under reducing conditions. Its function is as follows. Functions as a scaffold protein for the assembly of beta-carboxysomes, initiates carboxysome assembly by coalescing RuBisCO (ribulose bisphosphate carboxylase, rbcL-rbcS). Produced as a full-length (M58) and a short form (M35), possibly by alternative translation initiation; probably both forms are required for correct carboxysome assembly and growth. In this strain both forms are equally abundant. A moderately active carbonic anhydrase that catalyzes the reversible hydration of carbon dioxide. Essential to photosynthetic carbon dioxide fixation, supplies CO(2) to ribulose bisphosphate carboxylase (RuBisCO) in the carboxysome. Also hydrolyzes COS. Functionally, beta-carboxysome assembly initiates when soluble RuBisCO is condensed into a liquid matrix in a pre-carboxysome by the RbcS-like domains of probably both forms of CcmM. CcmN interacts with the N-terminus of full length CcmM, and then recruits the shell proteins (CcmK) via CcmN's encapsulation peptide. Shell formation requires both CcmK proteins and CcmO. CcmL caps the otherwise elongated carboxysome. Once fully encapsulated carboxysomes are formed, they migrate within the cell probably via interactions with the cytoskeleton. The chain is Carboxysome assembly protein CcmM from Nostoc sp. (strain PCC 7120 / SAG 25.82 / UTEX 2576).